Reading from the N-terminus, the 307-residue chain is tRNA pseudouridine synthase B (307 aa).

Residue Asp-47 is the Nucleophile of the active site.

This sequence belongs to the pseudouridine synthase TruB family. Type 1 subfamily.

The enzyme catalyses uridine(55) in tRNA = pseudouridine(55) in tRNA. Functionally, responsible for synthesis of pseudouridine from uracil-55 in the psi GC loop of transfer RNAs. This chain is tRNA pseudouridine synthase B, found in Chromohalobacter salexigens (strain ATCC BAA-138 / DSM 3043 / CIP 106854 / NCIMB 13768 / 1H11).